Here is a 153-residue protein sequence, read N- to C-terminus: Superoxide dismutase [Cu-Zn] (153 aa).

Cu cation is bound by residues histidine 45, histidine 47, and histidine 62. The cysteines at positions 56 and 145 are disulfide-linked. Histidine 62, histidine 70, histidine 79, and aspartate 82 together coordinate Zn(2+). Histidine 119 lines the Cu cation pocket.

The protein belongs to the Cu-Zn superoxide dismutase family. In terms of assembly, homodimer. Requires Cu cation as cofactor. Zn(2+) is required as a cofactor.

Its subcellular location is the cytoplasm. It catalyses the reaction 2 superoxide + 2 H(+) = H2O2 + O2. Its function is as follows. Destroys radicals which are normally produced within the cells and which are toxic to biological systems. The protein is Superoxide dismutase [Cu-Zn] (Sod) of Chymomyza amoena.